Here is a 304-residue protein sequence, read N- to C-terminus: Ribosomal RNA small subunit methyltransferase H (304 aa).

S-adenosyl-L-methionine is bound by residues 37–39 (GGH), aspartate 57, phenylalanine 79, aspartate 100, and histidine 107.

This sequence belongs to the methyltransferase superfamily. RsmH family.

It localises to the cytoplasm. The catalysed reaction is cytidine(1402) in 16S rRNA + S-adenosyl-L-methionine = N(4)-methylcytidine(1402) in 16S rRNA + S-adenosyl-L-homocysteine + H(+). In terms of biological role, specifically methylates the N4 position of cytidine in position 1402 (C1402) of 16S rRNA. This Bacteroides fragilis (strain YCH46) protein is Ribosomal RNA small subunit methyltransferase H.